Here is a 503-residue protein sequence, read N- to C-terminus: ATP synthase subunit alpha (503 aa).

Glycine 170–threonine 177 serves as a coordination point for ATP.

This sequence belongs to the ATPase alpha/beta chains family. In terms of assembly, F-type ATPases have 2 components, CF(1) - the catalytic core - and CF(0) - the membrane proton channel. CF(1) has five subunits: alpha(3), beta(3), gamma(1), delta(1), epsilon(1). CF(0) has three main subunits: a(1), b(2) and c(9-12). The alpha and beta chains form an alternating ring which encloses part of the gamma chain. CF(1) is attached to CF(0) by a central stalk formed by the gamma and epsilon chains, while a peripheral stalk is formed by the delta and b chains.

Its subcellular location is the cell inner membrane. It catalyses the reaction ATP + H2O + 4 H(+)(in) = ADP + phosphate + 5 H(+)(out). Its function is as follows. Produces ATP from ADP in the presence of a proton gradient across the membrane. The alpha chain is a regulatory subunit. This Geobacter sulfurreducens (strain ATCC 51573 / DSM 12127 / PCA) protein is ATP synthase subunit alpha.